We begin with the raw amino-acid sequence, 205 residues long: Proteasome subunit beta type-3 (205 aa).

Residue Ser-2 is modified to N-acetylserine. Position 77 is an N6-acetyllysine (Lys-77).

The protein belongs to the peptidase T1B family. The 26S proteasome consists of a 20S proteasome core and two 19S regulatory subunits. The 20S proteasome core is a barrel-shaped complex made of 28 subunits that are arranged in four stacked rings. The two outer rings are each formed by seven alpha subunits, and the two inner rings are formed by seven beta subunits. The proteolytic activity is exerted by three beta-subunits PSMB5, PSMB6 and PSMB7.

The protein resides in the cytoplasm. It localises to the nucleus. Functionally, non-catalytic component of the 20S core proteasome complex involved in the proteolytic degradation of most intracellular proteins. This complex plays numerous essential roles within the cell by associating with different regulatory particles. Associated with two 19S regulatory particles, forms the 26S proteasome and thus participates in the ATP-dependent degradation of ubiquitinated proteins. The 26S proteasome plays a key role in the maintenance of protein homeostasis by removing misfolded or damaged proteins that could impair cellular functions, and by removing proteins whose functions are no longer required. Associated with the PA200 or PA28, the 20S proteasome mediates ubiquitin-independent protein degradation. This type of proteolysis is required in several pathways including spermatogenesis (20S-PA200 complex) or generation of a subset of MHC class I-presented antigenic peptides (20S-PA28 complex). This is Proteasome subunit beta type-3 (PSMB3) from Bos taurus (Bovine).